A 150-amino-acid polypeptide reads, in one-letter code: Arginine repressor (150 aa).

It belongs to the ArgR family.

The protein resides in the cytoplasm. The protein operates within amino-acid biosynthesis; L-arginine biosynthesis [regulation]. Regulates arginine biosynthesis genes. The sequence is that of Arginine repressor from Clostridium beijerinckii (strain ATCC 51743 / NCIMB 8052) (Clostridium acetobutylicum).